The sequence spans 116 residues: Cystatin (116 aa).

The Secondary area of contact motif lies at 53-57; the sequence is QLVSG. 2 cysteine pairs are disulfide-bonded: C71/C81 and C95/C115. Position 80 is a phosphoserine (S80).

It belongs to the cystatin family.

It is found in the secreted. This protein binds tightly to and inhibits papain and cathepsin B. This is Cystatin from Coturnix japonica (Japanese quail).